The sequence spans 325 residues: NADH-quinone oxidoreductase subunit H (325 aa).

Helical transmembrane passes span 11–31 (ILLT…CGAF), 50–69 (SRVG…KMFF), 81–101 (LIFT…FAIV), 114–134 (IGIL…LFAG), 154–174 (LSYE…AGSF), 186–206 (LWNI…GVAV), 237–257 (FFVG…TLFF), 265–285 (LPPF…FILV), and 304–324 (ICLP…LYHA).

Belongs to the complex I subunit 1 family. NDH-1 is composed of 13 different subunits. Subunits NuoA, H, J, K, L, M, N constitute the membrane sector of the complex.

The protein localises to the cell inner membrane. It carries out the reaction a quinone + NADH + 5 H(+)(in) = a quinol + NAD(+) + 4 H(+)(out). Its function is as follows. NDH-1 shuttles electrons from NADH, via FMN and iron-sulfur (Fe-S) centers, to quinones in the respiratory chain. The immediate electron acceptor for the enzyme in this species is believed to be ubiquinone. Couples the redox reaction to proton translocation (for every two electrons transferred, four hydrogen ions are translocated across the cytoplasmic membrane), and thus conserves the redox energy in a proton gradient. This subunit may bind ubiquinone. This is NADH-quinone oxidoreductase subunit H from Edwardsiella ictaluri (strain 93-146).